A 571-amino-acid polypeptide reads, in one-letter code: Septation ring formation regulator EzrA (571 aa).

The Extracellular portion of the chain corresponds to 1–3 (MYY). A helical membrane pass occupies residues 4–22 (MLIGFIIVVIAVIGAGYIL). The Cytoplasmic segment spans residues 23–571 (KRKHYQRINE…ESKVSVDDIE (549 aa)). Coiled coils occupy residues 248-298 (LAQM…DTLE), 326-374 (DALA…ASGE), 400-437 (KFAEELRSLRKDELEARDDAERMRRAIITLDRKMERER), and 478-529 (RIAE…ENHF).

Belongs to the EzrA family.

The protein localises to the cell membrane. Negative regulator of FtsZ ring formation; modulates the frequency and position of FtsZ ring formation. Inhibits FtsZ ring formation at polar sites. Interacts either with FtsZ or with one of its binding partners to promote depolymerization. The polypeptide is Septation ring formation regulator EzrA (Listeria monocytogenes serovar 1/2a (strain ATCC BAA-679 / EGD-e)).